The primary structure comprises 249 residues: 2,3-bisphosphoglycerate-dependent phosphoglycerate mutase (249 aa).

Substrate-binding positions include 8-15 (RHGESTWN), 21-22 (TG), Arg-60, 87-90 (ERHY), Lys-98, 114-115 (RR), and 183-184 (GN). His-9 functions as the Tele-phosphohistidine intermediate in the catalytic mechanism. Glu-87 functions as the Proton donor/acceptor in the catalytic mechanism.

This sequence belongs to the phosphoglycerate mutase family. BPG-dependent PGAM subfamily. Homodimer.

It catalyses the reaction (2R)-2-phosphoglycerate = (2R)-3-phosphoglycerate. It functions in the pathway carbohydrate degradation; glycolysis; pyruvate from D-glyceraldehyde 3-phosphate: step 3/5. Catalyzes the interconversion of 2-phosphoglycerate and 3-phosphoglycerate. The protein is 2,3-bisphosphoglycerate-dependent phosphoglycerate mutase of Azoarcus sp. (strain BH72).